Consider the following 344-residue polypeptide: Hyoscyamine 6-dioxygenase (344 aa).

The region spanning 193–293 is the Fe2OG dioxygenase domain; the sequence is QIQMMLTNYY…RVSIATLIGP (101 aa). H217, D219, and H274 together coordinate Fe cation. R284 contacts 2-oxoglutarate.

Belongs to the iron/ascorbate-dependent oxidoreductase family. Monomer. Requires Fe(2+) as cofactor. L-ascorbate serves as cofactor. The N-terminus is blocked. In terms of tissue distribution, root.

The enzyme catalyses L-hyoscyamine + 2-oxoglutarate + O2 = (6S)-6-hydroxyhyoscyamine + succinate + CO2. It participates in alkaloid biosynthesis; scopolamine biosynthesis. This chain is Hyoscyamine 6-dioxygenase (H6H), found in Hyoscyamus niger (Black henbane).